We begin with the raw amino-acid sequence, 177 residues long: Large ribosomal subunit protein uL6 (177 aa).

The protein belongs to the universal ribosomal protein uL6 family. As to quaternary structure, part of the 50S ribosomal subunit.

This protein binds to the 23S rRNA, and is important in its secondary structure. It is located near the subunit interface in the base of the L7/L12 stalk, and near the tRNA binding site of the peptidyltransferase center. This Vibrio atlanticus (strain LGP32) (Vibrio splendidus (strain Mel32)) protein is Large ribosomal subunit protein uL6.